A 370-amino-acid polypeptide reads, in one-letter code: uncharacterized protein (370 aa).

Positions 152, 154, 184, 215, 306, and 308 each coordinate a divalent metal cation.

The protein belongs to the metallophosphoesterase superfamily. A divalent metal cation is required as a cofactor.

This is an uncharacterized protein from Helicobacter pylori (strain J99 / ATCC 700824) (Campylobacter pylori J99).